The sequence spans 301 residues: Cilia- and flagella-associated protein 161 (301 aa).

The protein localises to the cytoplasm. Its subcellular location is the cytoskeleton. It localises to the cilium axoneme. Microtubule inner protein (MIP) part of the dynein-decorated doublet microtubules (DMTs) in cilia axoneme, which is required for motile cilia beating. The protein is Cilia- and flagella-associated protein 161 of Danio rerio (Zebrafish).